Consider the following 339-residue polypeptide: Glyceraldehyde-3-phosphate dehydrogenase (339 aa).

NAD(+) is bound by residues 12–13, D39, R84, and S127; that span reads RI. Residues 157 to 159, T188, R203, 216 to 217, and R239 each bind D-glyceraldehyde 3-phosphate; these read SCT and TG. C158 functions as the Nucleophile in the catalytic mechanism. NAD(+) is bound at residue N320.

The protein belongs to the glyceraldehyde-3-phosphate dehydrogenase family. Homotetramer.

The protein resides in the cytoplasm. It carries out the reaction D-glyceraldehyde 3-phosphate + phosphate + NAD(+) = (2R)-3-phospho-glyceroyl phosphate + NADH + H(+). Its pathway is carbohydrate degradation; glycolysis; pyruvate from D-glyceraldehyde 3-phosphate: step 1/5. In terms of biological role, catalyzes the oxidative phosphorylation of glyceraldehyde 3-phosphate (G3P) to 1,3-bisphosphoglycerate (BPG) using the cofactor NAD. The first reaction step involves the formation of a hemiacetal intermediate between G3P and a cysteine residue, and this hemiacetal intermediate is then oxidized to a thioester, with concomitant reduction of NAD to NADH. The reduced NADH is then exchanged with the second NAD, and the thioester is attacked by a nucleophilic inorganic phosphate to produce BPG. This chain is Glyceraldehyde-3-phosphate dehydrogenase (gapA), found in Mycobacterium leprae (strain TN).